A 487-amino-acid polypeptide reads, in one-letter code: uncharacterized protein (487 aa).

Disordered stretches follow at residues 35–153 (VSRK…SGDQ), 237–345 (NTTK…AKAL), and 358–395 (QKRK…SSAA). Residues 54-96 (FDQEDILDTVPEQTDENEDEAGDDELESEKEELDYDEEEDDED) are compositionally biased toward acidic residues. Positions 97–132 (RRERTSRYTSEKKGSRKDSVEGDENKKENGQDETKR) are enriched in basic and acidic residues. Residues 241 to 253 (SKSRGRDTRKRRS) show a composition bias toward basic residues. The segment covering 254 to 264 (SSYSSTSSSSD) has biased composition (low complexity). Basic and acidic residues-rich tracts occupy residues 273-338 (SRSD…KHSA) and 358-383 (QKRK…KKEV). A compositionally biased stretch (low complexity) spans 385-395 (TTVSTNTSSAA).

This is an uncharacterized protein from Caenorhabditis elegans.